We begin with the raw amino-acid sequence, 555 residues long: F-box only protein 33 (555 aa).

In terms of domain architecture, F-box spans 65–111 (AAGAASLPSELIVHIFSFLPAPDRLRASASCSHWRECLFYPALWPQL).

Part of the SCF (SKP1-CUL1-F-box) E3 ubiquitin-protein ligase complex SCF(FBXO33) formed of CUL1, SKP1, RBX1 and FBXO33. Interacts via its N-terminus with YBX1 CSD domain. Directly interacts with SKP1 and CUL1.

The protein operates within protein modification; protein ubiquitination. Functionally, substrate recognition component of a SCF (SKP1-CUL1-F-box protein) E3 ubiquitin-protein ligase complex which mediates the ubiquitination and subsequent proteasomal degradation of target proteins. Probably recognizes and binds to phosphorylated target proteins. Recognizes YBX1. The sequence is that of F-box only protein 33 (FBXO33) from Homo sapiens (Human).